The chain runs to 143 residues: MAVQRTFSIIKPDAVAKNVIGEITTRFEKAGLRVVASKMVQLSEREAAGFYAEHSERGFFKDLVAFMTSGPVIVQVLEGEDAVLKNRELMGATNPKEAAPGTIRADFAVSIDENAVHGSDSEASAAREIAYFFSATELCARIR.

Residues lysine 11, phenylalanine 59, arginine 87, threonine 93, arginine 104, and asparagine 114 each contribute to the ATP site. Histidine 117 acts as the Pros-phosphohistidine intermediate in catalysis.

This sequence belongs to the NDK family. Homotetramer. Mg(2+) serves as cofactor.

It is found in the cytoplasm. The enzyme catalyses a 2'-deoxyribonucleoside 5'-diphosphate + ATP = a 2'-deoxyribonucleoside 5'-triphosphate + ADP. It catalyses the reaction a ribonucleoside 5'-diphosphate + ATP = a ribonucleoside 5'-triphosphate + ADP. Functionally, major role in the synthesis of nucleoside triphosphates other than ATP. The ATP gamma phosphate is transferred to the NDP beta phosphate via a ping-pong mechanism, using a phosphorylated active-site intermediate. This Ectopseudomonas mendocina (strain ymp) (Pseudomonas mendocina) protein is Nucleoside diphosphate kinase.